The sequence spans 502 residues: ATP synthase subunit alpha (502 aa).

Positions 115–135 (VDGLGPINTTNTRPIESPAPG) are disordered. 169 to 176 (GDRQTGKT) is a binding site for ATP.

The protein belongs to the ATPase alpha/beta chains family. As to quaternary structure, F-type ATPases have 2 components, CF(1) - the catalytic core - and CF(0) - the membrane proton channel. CF(1) has five subunits: alpha(3), beta(3), gamma(1), delta(1), epsilon(1). CF(0) has three main subunits: a(1), b(2) and c(9-12). The alpha and beta chains form an alternating ring which encloses part of the gamma chain. CF(1) is attached to CF(0) by a central stalk formed by the gamma and epsilon chains, while a peripheral stalk is formed by the delta and b chains.

It localises to the cell membrane. It carries out the reaction ATP + H2O + 4 H(+)(in) = ADP + phosphate + 5 H(+)(out). Its function is as follows. Produces ATP from ADP in the presence of a proton gradient across the membrane. The alpha chain is a regulatory subunit. This Bacillus mycoides (strain KBAB4) (Bacillus weihenstephanensis) protein is ATP synthase subunit alpha.